We begin with the raw amino-acid sequence, 216 residues long: RNA pyrophosphohydrolase (216 aa).

Positions 6–149 (GFRPNVGIIL…KRDVYQLALT (144 aa)) constitute a Nudix hydrolase domain. The Nudix box motif lies at 38–59 (GGIKYGETPMQAMYRELHEETG).

Belongs to the Nudix hydrolase family. RppH subfamily. A divalent metal cation serves as cofactor.

In terms of biological role, accelerates the degradation of transcripts by removing pyrophosphate from the 5'-end of triphosphorylated RNA, leading to a more labile monophosphorylated state that can stimulate subsequent ribonuclease cleavage. This is RNA pyrophosphohydrolase from Burkholderia ambifaria (strain MC40-6).